Here is a 247-residue protein sequence, read N- to C-terminus: UPF0280 protein MmarC7_0482 (247 aa).

Belongs to the UPF0280 family.

The sequence is that of UPF0280 protein MmarC7_0482 from Methanococcus maripaludis (strain C7 / ATCC BAA-1331).